Here is a 715-residue protein sequence, read N- to C-terminus: 1,4-alpha-glucan branching enzyme GlgB (715 aa).

Residue aspartate 399 is the Nucleophile of the active site. Catalysis depends on glutamate 452, which acts as the Proton donor.

This sequence belongs to the glycosyl hydrolase 13 family. GlgB subfamily. Monomer.

It carries out the reaction Transfers a segment of a (1-&gt;4)-alpha-D-glucan chain to a primary hydroxy group in a similar glucan chain.. Its pathway is glycan biosynthesis; glycogen biosynthesis. Its function is as follows. Catalyzes the formation of the alpha-1,6-glucosidic linkages in glycogen by scission of a 1,4-alpha-linked oligosaccharide from growing alpha-1,4-glucan chains and the subsequent attachment of the oligosaccharide to the alpha-1,6 position. In Rhodopseudomonas palustris (strain BisA53), this protein is 1,4-alpha-glucan branching enzyme GlgB.